Reading from the N-terminus, the 300-residue chain is Acetylglutamate kinase (300 aa).

Substrate contacts are provided by residues 69 to 70, R91, and N197; that span reads GG.

This sequence belongs to the acetylglutamate kinase family. ArgB subfamily.

It is found in the cytoplasm. It carries out the reaction N-acetyl-L-glutamate + ATP = N-acetyl-L-glutamyl 5-phosphate + ADP. It participates in amino-acid biosynthesis; L-arginine biosynthesis; N(2)-acetyl-L-ornithine from L-glutamate: step 2/4. In terms of biological role, catalyzes the ATP-dependent phosphorylation of N-acetyl-L-glutamate. This Kineococcus radiotolerans (strain ATCC BAA-149 / DSM 14245 / SRS30216) protein is Acetylglutamate kinase.